We begin with the raw amino-acid sequence, 299 residues long: Fructose-1,6-bisphosphatase class 1 (299 aa).

Mg(2+)-binding residues include Glu79, Asp98, Leu100, and Asp101. Residues 101 to 104 (DGSS), Tyr207, and Lys238 contribute to the substrate site. Glu244 contributes to the Mg(2+) binding site.

Belongs to the FBPase class 1 family. As to quaternary structure, homotetramer. Mg(2+) serves as cofactor.

The protein resides in the cytoplasm. It catalyses the reaction beta-D-fructose 1,6-bisphosphate + H2O = beta-D-fructose 6-phosphate + phosphate. Its pathway is carbohydrate biosynthesis; gluconeogenesis. The chain is Fructose-1,6-bisphosphatase class 1 from Campylobacter curvus (strain 525.92).